Reading from the N-terminus, the 418-residue chain is D-inositol 3-phosphate glycosyltransferase (418 aa).

Histidine 9 provides a ligand contact to 1D-myo-inositol 3-phosphate. UDP-N-acetyl-alpha-D-glucosamine is bound by residues 15 to 16 (QP) and glycine 23. 1D-myo-inositol 3-phosphate contacts are provided by residues 20–25 (DSGGMN), lysine 78, tyrosine 110, threonine 134, and arginine 154. Arginine 231, lysine 236, and arginine 294 together coordinate UDP-N-acetyl-alpha-D-glucosamine. The Mg(2+) site is built by tyrosine 303, arginine 304, and alanine 306. Glutamate 316 and glutamate 324 together coordinate UDP-N-acetyl-alpha-D-glucosamine. Residue threonine 330 participates in Mg(2+) binding.

The protein belongs to the glycosyltransferase group 1 family. MshA subfamily. In terms of assembly, homodimer.

It catalyses the reaction 1D-myo-inositol 3-phosphate + UDP-N-acetyl-alpha-D-glucosamine = 1D-myo-inositol 2-acetamido-2-deoxy-alpha-D-glucopyranoside 3-phosphate + UDP + H(+). Catalyzes the transfer of a N-acetyl-glucosamine moiety to 1D-myo-inositol 3-phosphate to produce 1D-myo-inositol 2-acetamido-2-deoxy-glucopyranoside 3-phosphate in the mycothiol biosynthesis pathway. This Corynebacterium glutamicum (strain R) protein is D-inositol 3-phosphate glycosyltransferase.